A 1581-amino-acid polypeptide reads, in one-letter code: Mediator of RNA polymerase II transcription subunit 1 (1581 aa).

The interval 1-670 (MKAQGETEES…YGSSPLERQN (670 aa)) is interaction with the Mediator complex and THRA. The interval 16 to 590 (MSSLLERLHA…SIKDRHESVG (575 aa)) is interaction with ESR1. Interaction with the Mediator complex stretches follow at residues 108 to 212 (FYVE…GYLT) and 215 to 390 (SGGH…SLQG). The interval 405 to 644 (PLILNLIRHQ…MAGNTKNHPM (240 aa)) is interaction with THRA. Residues 542–789 (PASSPGYGMT…TDILSDIAEE (248 aa)) are interaction with VDR. Serine 588 carries the post-translational modification Phosphoserine. Positions 604–608 (LTSLL) match the LXXLL motif 1 motif. 4 disordered regions span residues 609 to 705 (QITG…HQTE), 792 to 820 (KLPSTSDDCPAIGTPLRDSSSSGHSQSTL), 874 to 893 (SQSGFGEEYFDESSQSGDND), and 948 to 1566 (EHHS…DFMI). The segment covering 622–632 (PTPPHHTPPPV) has biased composition (pro residues). The segment at 622–701 (PTPPHHTPPP…SSRLPPEKPK (80 aa)) is interaction with PPARGC1A and THRA. Residues 645-649 (LMNLL) carry the LXXLL motif 2 motif. The segment covering 655–675 (QDFSTLYGSSPLERQNSSSGS) has biased composition (polar residues). Residues 656–1066 (DFSTLYGSSP…TPPIPKITIQ (411 aa)) are interaction with ESR1. The residue at position 664 (serine 664) is a Phosphoserine. An interaction with GATA1 region spans residues 681–715 (CSGSNKTKKKKSSRLPPEKPKHQTEDDFQRELFSM). Positions 696–705 (PPEKPKHQTE) are enriched in basic and acidic residues. Serine 795 is subject to Phosphoserine. At threonine 805 the chain carries Phosphothreonine. Polar residues predominate over residues 808 to 820 (RDSSSSGHSQSTL). Positions 875 to 902 (QSGFGEEYFDESSQSGDNDDFKGFASQA) match the Integrase domain-binding motif (IBM) motif. Residues serine 887 and serine 953 each carry the phosphoserine modification. The span at 963–974 (LGKEKTQKRVKE) shows a compositional bias: basic and acidic residues. A Phosphothreonine; by MAPK1 or MAPK3 modification is found at threonine 1032. The span at 1034 to 1045 (PTSTGGSKSPGS) shows a compositional bias: low complexity. 2 positions are modified to phosphothreonine: threonine 1051 and threonine 1057. Composition is skewed to low complexity over residues 1078–1094 (SSHSQYTSSGSVSSSGS) and 1101–1156 (SSSS…PGSS). The residue at position 1156 (serine 1156) is a Phosphoserine. The span at 1162-1195 (GLSSGSSSTKMKPQGKPSSLMNPSLSKPNISPSH) shows a compositional bias: polar residues. Position 1177 is an N6-acetyllysine (lysine 1177). Position 1207 is a phosphoserine (serine 1207). Position 1215 is a phosphothreonine (threonine 1215). Low complexity-rich tracts occupy residues 1218–1227 (SSKAKSPISS) and 1234–1293 (MSGT…SKGK). The residue at position 1223 (serine 1223) is a Phosphoserine. The interaction with TP53 stretch occupies residues 1249–1421 (LGSSGSLSQK…KPGESSGEGL (173 aa)). Serine 1302 bears the Phosphoserine mark. Positions 1330 to 1345 (GVSTNSSSHPMSSKHN) are enriched in polar residues. Phosphoserine is present on serine 1347. The segment covering 1352 to 1364 (QGKREKSDKDKSK) has biased composition (basic and acidic residues). Phosphoserine is present on residues serine 1403 and serine 1433. Composition is skewed to polar residues over residues 1425 to 1440 (MASSKNYGSPLISGST) and 1448 to 1482 (PSHSKSPAYTPQNLDSESESGSSIAEKSYQNSPSS). Phosphothreonine is present on threonine 1440. The residue at position 1457 (threonine 1457) is a Phosphothreonine; by MAPK1 or MAPK3. Phosphoserine occurs at positions 1463, 1465, 1479, 1481, and 1482. Basic residues predominate over residues 1496 to 1505 (KHKKHKKEKK). Residues 1506 to 1522 (KVKDKDRDRDRDKDRDK) are compositionally biased toward basic and acidic residues. The residue at position 1529 (lysine 1529) is an N6-acetyllysine. Positions 1533–1552 (WSKSPISSDQSLSMTSNTIL) are enriched in polar residues.

It belongs to the Mediator complex subunit 1 family. As to quaternary structure, component of the Mediator complex, which is composed of MED1, MED4, MED6, MED7, MED8, MED9, MED10, MED11, MED12, MED13, MED13L, MED14, MED15, MED16, MED17, MED18, MED19, MED20, MED21, MED22, MED23, MED24, MED25, MED26, MED27, MED29, MED30, MED31, CCNC, CDK8 and CDC2L6/CDK11. The MED12, MED13, CCNC and CDK8 subunits form a distinct module termed the CDK8 module. Mediator containing the CDK8 module is less active than Mediator lacking this module in supporting transcriptional activation. Individual preparations of the Mediator complex lacking one or more distinct subunits have been variously termed ARC, CRSP, DRIP, PC2, SMCC and TRAP. This subunit specifically interacts with a number of nuclear receptors in a ligand-dependent fashion including AR, ESR1, ESR2, PPARA, PPARG, RORA, RXRA, RXRG, THRA, THRB and VDR. Interacts with CTNNB1, GABPA, GLI3, PPARGC1A and TP53. Interacts with YWHAH. Interacts with CLOCK; this interaction requires the presence of THRAP3. Interacts with GATA1 and CCAR1. Interacts with NR4A3. Interacts (via IBM motif) with PSIP1 (via IBD domain); phosphorylation increases its affinity for PSIP1. Interacts with USP22. Post-translationally, phosphorylated by MAPK1 or MAPK3 during G2/M phase which may enhance protein stability and promote entry into the nucleolus. Phosphorylation increases its interaction with PSIP1. Ubiquitously expressed.

It is found in the nucleus. Functionally, component of the Mediator complex, a coactivator involved in the regulated transcription of nearly all RNA polymerase II-dependent genes. Mediator functions as a bridge to convey information from gene-specific regulatory proteins to the basal RNA polymerase II transcription machinery. Mediator is recruited to promoters by direct interactions with regulatory proteins and serves as a scaffold for the assembly of a functional preinitiation complex with RNA polymerase II and the general transcription factors. Acts as a coactivator for GATA1-mediated transcriptional activation during erythroid differentiation of K562 erythroleukemia cells. The sequence is that of Mediator of RNA polymerase II transcription subunit 1 (MED1) from Homo sapiens (Human).